The primary structure comprises 174 residues: NADH-ubiquinone oxidoreductase chain 6 (174 aa).

A run of 5 helical transmembrane segments spans residues 4–24 (LIIM…KHPL), 25–45 (SMGL…GIYV), 48–68 (FWFS…LFIY), 82–102 (FNLT…FFII), and 143–163 (LITL…VKIT).

It belongs to the complex I subunit 6 family.

It is found in the mitochondrion membrane. The catalysed reaction is a ubiquinone + NADH + 5 H(+)(in) = a ubiquinol + NAD(+) + 4 H(+)(out). Its function is as follows. Core subunit of the mitochondrial membrane respiratory chain NADH dehydrogenase (Complex I) that is believed to belong to the minimal assembly required for catalysis. Complex I functions in the transfer of electrons from NADH to the respiratory chain. The immediate electron acceptor for the enzyme is believed to be ubiquinone. The protein is NADH-ubiquinone oxidoreductase chain 6 (ND6) of Anopheles quadrimaculatus (Common malaria mosquito).